The chain runs to 203 residues: Dephospho-CoA kinase (203 aa).

The 199-residue stretch at 3–201 (SVGLTGGIGS…QRYLGYAAAA (199 aa)) folds into the DPCK domain. ATP is bound at residue 11–16 (GSGKTT).

This sequence belongs to the CoaE family.

The protein localises to the cytoplasm. It carries out the reaction 3'-dephospho-CoA + ATP = ADP + CoA + H(+). It participates in cofactor biosynthesis; coenzyme A biosynthesis; CoA from (R)-pantothenate: step 5/5. Catalyzes the phosphorylation of the 3'-hydroxyl group of dephosphocoenzyme A to form coenzyme A. In Burkholderia thailandensis (strain ATCC 700388 / DSM 13276 / CCUG 48851 / CIP 106301 / E264), this protein is Dephospho-CoA kinase.